Here is a 269-residue protein sequence, read N- to C-terminus: Putative pyruvate, phosphate dikinase regulatory protein (269 aa).

147–154 (GVSRTSKT) contacts ADP.

This sequence belongs to the pyruvate, phosphate/water dikinase regulatory protein family. PDRP subfamily.

The enzyme catalyses N(tele)-phospho-L-histidyl/L-threonyl-[pyruvate, phosphate dikinase] + ADP = N(tele)-phospho-L-histidyl/O-phospho-L-threonyl-[pyruvate, phosphate dikinase] + AMP + H(+). It carries out the reaction N(tele)-phospho-L-histidyl/O-phospho-L-threonyl-[pyruvate, phosphate dikinase] + phosphate + H(+) = N(tele)-phospho-L-histidyl/L-threonyl-[pyruvate, phosphate dikinase] + diphosphate. Bifunctional serine/threonine kinase and phosphorylase involved in the regulation of the pyruvate, phosphate dikinase (PPDK) by catalyzing its phosphorylation/dephosphorylation. This is Putative pyruvate, phosphate dikinase regulatory protein from Geotalea daltonii (strain DSM 22248 / JCM 15807 / FRC-32) (Geobacter daltonii).